The following is a 290-amino-acid chain: Zinc-finger homeodomain protein 2 (290 aa).

A compositionally biased stretch (acidic residues) spans 1 to 15 (MDFDDHDEGDGDEEM). Residues 1 to 59 (MDFDDHDEGDGDEEMPPMPLSSGYDAPMQPGLGGGGGGVPKPGGGVGGGGGGGGGGGGG) are disordered. The segment covering 31 to 59 (GLGGGGGGVPKPGGGVGGGGGGGGGGGGG) has biased composition (gly residues). Residues 63–112 (YRECLKNHAVGIGGHAVDGCGEFMASGEEGSIDALRCAACGCHRNFHRKE) form a ZF-HD dimerization-type; degenerate zinc finger. The segment at residues 226-289 (KKRFRTKFTQ…NNKHTLGKKA (64 aa)) is a DNA-binding region (homeobox).

In terms of assembly, homo- and heterodimer with other ZFHD proteins.

It localises to the nucleus. Functionally, putative transcription factor. The protein is Zinc-finger homeodomain protein 2 (ZHD2) of Oryza sativa subsp. japonica (Rice).